Consider the following 1216-residue polypeptide: Probable phospholipid-transporting ATPase 4 (1216 aa).

The Cytoplasmic segment spans residues 1 to 74 (MARGRIRSKL…TTRYNLITFF (74 aa)). A helical transmembrane segment spans residues 75-96 (PKCLYEQFHRAANFYFLVAAIL). Residues 97 to 100 (SVFP) lie on the Extracellular side of the membrane. A helical transmembrane segment spans residues 101–123 (LSPFNKWSMIAPLVFVVGLSMLK). At 124 to 305 (EALEDWSRFM…SRIEKTMDYI (182 aa)) the chain is on the cytoplasmic side. A helical transmembrane segment spans residues 306–327 (IYTLLVLLILISCISSSGFAWE). Residues 328–359 (TKFHMPKWWYLRPEEPENLTNPSNPVYAGFVH) lie on the Extracellular side of the membrane. Residues 360-377 (LITALLLYGYLIPISLYV) form a helical membrane-spanning segment. Topologically, residues 378-922 (SIEVVKVLQA…HGHWCYKRIA (545 aa)) are cytoplasmic. Residue aspartate 425 is the 4-aspartylphosphate intermediate of the active site. A Glycyl lysine isopeptide (Lys-Gly) (interchain with G-Cter in ubiquitin) cross-link involves residue lysine 605. 2 residues coordinate Mg(2+): aspartate 867 and aspartate 871. Residues 923–942 (QMICYFFYKNIAFGLTLFYF) form a helical membrane-spanning segment. Residues 943–956 (EAFTGFSGQSVYND) lie on the Extracellular side of the membrane. Residues 957–976 (YYLLLFNVVLTSLPVIALGV) traverse the membrane as a helical segment. Residues 977–1006 (FEQDVSSEICLQFPALYQQGKKNLFFDWYR) lie on the Cytoplasmic side of the membrane. Residues 1007 to 1029 (ILGWMGNGVYSSLVIFFLNIGII) traverse the membrane as a helical segment. The Extracellular portion of the chain corresponds to 1030 to 1042 (YEQAFRVSGQTAD). A helical membrane pass occupies residues 1043-1065 (MDAVGTTMFTCIIWAVNVQIALT). The Cytoplasmic segment spans residues 1066–1071 (VSHFTW). The helical transmembrane segment at 1072 to 1092 (IQHVLIWGSIGLWYLFVALYG) threads the bilayer. The Extracellular portion of the chain corresponds to 1093–1109 (MMPPSLSGNIYRILVEI). Residues 1110 to 1134 (LAPAPIYWIATFLVTVTTVLPYFAH) traverse the membrane as a helical segment. At 1135–1216 (ISFQRFLHPL…TQDTMSPRSV (82 aa)) the chain is on the cytoplasmic side. A disordered region spans residues 1195-1216 (LNKKQSNMSQFSTQDTMSPRSV). Residues 1198 to 1216 (KQSNMSQFSTQDTMSPRSV) are compositionally biased toward polar residues.

This sequence belongs to the cation transport ATPase (P-type) (TC 3.A.3) family. Type IV subfamily.

The protein localises to the membrane. The enzyme catalyses ATP + H2O + phospholipidSide 1 = ADP + phosphate + phospholipidSide 2.. In terms of biological role, involved in transport of phospholipids. In Arabidopsis thaliana (Mouse-ear cress), this protein is Probable phospholipid-transporting ATPase 4.